Here is a 77-residue protein sequence, read N- to C-terminus: Putative defensin-like protein 129 (77 aa).

The first 25 residues, 1-25 (MTKNTALTIFMVVLVIEMVMEETQG), serve as a signal peptide directing secretion. Cystine bridges form between cysteine 28–cysteine 77, cysteine 37–cysteine 59, cysteine 42–cysteine 71, and cysteine 46–cysteine 73.

Belongs to the DEFL family.

Its subcellular location is the secreted. The protein is Putative defensin-like protein 129 (LCR13) of Arabidopsis thaliana (Mouse-ear cress).